Reading from the N-terminus, the 745-residue chain is Protein PHOX1 (745 aa).

Residues Met1 to Asn10 show a composition bias toward basic residues. Residues Met1–Ala37 are disordered. 3 TPR repeats span residues Ala52 to Asp85, Ala90 to Phe125, and Ser126 to Asn159. The region spanning Thr280–Val359 is the PB1 domain. TPR repeat units follow at residues Glu406 to Ala441, Glu443 to Asn472, Glu494 to Phe528, and Gly553 to Met586.

As to quaternary structure, interacts with myosin XI-1 and XI-K.

Its subcellular location is the cytoplasmic vesicle membrane. Carboxylate clamp type tetratricopeptide repeat protein that may act as a potential Hsp90/Hsp70 co-chaperone. Contributes to polar growth of root hairs. This is Protein PHOX1 from Arabidopsis thaliana (Mouse-ear cress).